An 897-amino-acid chain; its full sequence is Staphylococcal nuclease domain-containing protein 1 (897 aa).

4 consecutive TNase-like domains span residues 18–167, 194–329, 342–499, and 528–663; these read QLQR…LWSE, KPVN…IWKD, RQFV…LHSK, and GRSE…LWAN. Positions 732-790 constitute a Tudor domain; sequence APRRGEFCIAKFADGEWYRARVEKVESPAKVHVFYIDYGNREVLSSTRLAALPPAFSTR.

Its subcellular location is the cytoplasm. In Danio rerio (Zebrafish), this protein is Staphylococcal nuclease domain-containing protein 1 (snd1).